A 763-amino-acid polypeptide reads, in one-letter code: 1,4-alpha-glucan branching enzyme GlgB (763 aa).

The Nucleophile role is filled by Asp-437. Glu-488 functions as the Proton donor in the catalytic mechanism.

The protein belongs to the glycosyl hydrolase 13 family. GlgB subfamily. As to quaternary structure, monomer.

It carries out the reaction Transfers a segment of a (1-&gt;4)-alpha-D-glucan chain to a primary hydroxy group in a similar glucan chain.. It functions in the pathway glycan biosynthesis; glycogen biosynthesis. Functionally, catalyzes the formation of the alpha-1,6-glucosidic linkages in glycogen by scission of a 1,4-alpha-linked oligosaccharide from growing alpha-1,4-glucan chains and the subsequent attachment of the oligosaccharide to the alpha-1,6 position. The sequence is that of 1,4-alpha-glucan branching enzyme GlgB from Synechococcus sp. (strain JA-2-3B'a(2-13)) (Cyanobacteria bacterium Yellowstone B-Prime).